The chain runs to 249 residues: MSGHSKWANIKHRKAAADAKKGKLFSQLSKEIIIAAKHGGGNPETNPRLRAAIERAKEANMPKENIEKAIMRGIGAIPGVAYEEVTYEGYGPGGVAIMVEVVTDNKNRTAAEIRRIFTKHGGSLGEAGCVAWIFEDKGSIFIEKESVKDEDQLIADALEAGAEDVQISGDSVEIITSPENFSEVKNVLEEKGYKITQAEVTKVPKNVVPVDGPDAEKVLKLMEELEDHDDVQKTYANFDIPDEILQSLS.

It belongs to the TACO1 family.

The protein localises to the cytoplasm. The sequence is that of Probable transcriptional regulatory protein DICTH_1505 from Dictyoglomus thermophilum (strain ATCC 35947 / DSM 3960 / H-6-12).